The primary structure comprises 159 residues: GKATTKKVEIPERDRYDNGYDNHGHDDFEHDQTEVDIQEVVRKEKESYDHNERDIYGNARNDFEHVQTEVDIQEVVRKEKESYDHNIGDRYGNIHDDFEHDQTEVDIQEVVRKEEESYDRNEGDRYGNGHDDFEHDQTEVDIQEVVRKEKESYAHKYRR.

Disordered stretches follow at residues 1–33 and 80–159; these read GKATTKKVEIPERDRYDNGYDNHGHDDFEHDQT and KESY…KYRR.

In terms of tissue distribution, component of the organic matrix of calcified shell layers.

This chain is Gigasin-1, found in Magallana gigas (Pacific oyster).